Consider the following 386-residue polypeptide: MARKDTNKQYSLRKLKTGTASVAVAVAVLGAGFANQTEVKAAEIKKPQADSAWNWPKEYNALLKENEELKVEREKYLSYADDKEKDPQYRALMGENQDLRKREGQYQDKIEELEKERKEKQERQEQLERQYQIEADKHYQEQQKKHQQEQQQLEAEKQKLAKDKQISDASRQGLSRDLEASRAAKKELEAEHQKLKEEKQISDASRQGLSRDLEASREAKKKVEADLAALTAEHQKLKEDKQISDASRQGLSRDLEASREAKKKVEADLAEANSKLQALEKLNKELEEGKKLSEKEKAELQARLEAEAKALKEQLAKQAEELAKLKGNQTPNAKVAPQANRSRSAMTQQKRTLPSTGETANPFFTAAAATVMVSAGMLALKRKEEN.

The N-terminal stretch at 1-41 (MARKDTNKQYSLRKLKTGTASVAVAVAVLGAGFANQTEVKA) is a signal peptide. The segment at 42 to 152 (AEIKKPQADS…QKKHQQEQQQ (111 aa)) is igA-binding. Basic and acidic residues-rich tracts occupy residues 79–88 (YADDKEKDPQ), 97–128 (QDLRKREGQYQDKIEELEKERKEKQERQEQLE), 134–166 (EADKHYQEQQKKHQQEQQQLEAEKQKLAKDKQI), 174–201 (LSRDLEASRAAKKELEAEHQKLKEEKQI), 209–221 (LSRDLEASREAKK), 233–243 (EHQKLKEDKQI), and 251–267 (LSRDLEASREAKKKVEA). Disordered regions lie at residues 79–221 (YADD…EAKK) and 233–268 (EHQKLKEDKQISDASRQGLSRDLEASREAKKKVEAD). C repeat units lie at residues 158–192 (QKLAKDKQISDASRQGLSRDLEASRAAKKELEAEH), 193–227 (QKLKEEKQISDASRQGLSRDLEASREAKKKVEADL), and 235–269 (QKLKEDKQISDASRQGLSRDLEASREAKKKVEADL). D repeat units lie at residues 302 to 307 (ARLEAE), 308 to 313 (AKALKE), 316 to 321 (AKQAEE), and 323 to 328 (AKLKGN). The tract at residues 323-360 (AKLKGNQTPNAKVAPQANRSRSAMTQQKRTLPSTGETA) is disordered. Polar residues predominate over residues 339-359 (ANRSRSAMTQQKRTLPSTGET). An LPXTG sorting signal motif is present at residues 353-357 (LPSTG). Thr356 is modified (pentaglycyl murein peptidoglycan amidated threonine). Residues 357 to 386 (GETANPFFTAAAATVMVSAGMLALKRKEEN) constitute a propeptide, removed by sortase.

It belongs to the M protein family.

Its subcellular location is the secreted. It is found in the cell wall. Binds IgA of both subclasses, and also binds polyclonal IgG weakly. The protein is IgA receptor (arp4) of Streptococcus pyogenes.